Here is a 430-residue protein sequence, read N- to C-terminus: MPAGRAVSGRLENDMTTHAMTDAARAGAVTRRGVPRHLADFSLAERRRWVAELGEPSFRAVQISAHYFGRLTENPDEMTDLPASSRRELVGVLLPPLLRPVRELACDNGLTRKILWRLSDGAYVESVLMRYPPRHSRHAALGAEADADGGSRHGRVTLCVSSQAGCGMGCPFCATGQAGLVRNLSAAEIVAQVAVAARTVARGEMAGGPGRLSNVVFMGMGEPLANYRSVVDAVRRITEPPPEGLGISQRSVTVSTVGLVPAIERLATEGLAVTLAVSLHAPDDELRNVLVPINRRWPVRDVLGAAARYAEVTKRRVSVEYALIRDVNDQPWRADALAAQVKEFLGRLGHVNLIPLNPTPGSPWTASTPRAQAEFVRRLAAAGVTVTVRDTRGREVNGACGQLAATVEFRGRTVQETPAPSMAALDDAVR.

The Proton acceptor role is filled by E125. The region spanning 152 to 395 (RHGRVTLCVS…VTVRDTRGRE (244 aa)) is the Radical SAM core domain. A disulfide bond links C159 and C400. The [4Fe-4S] cluster site is built by C166, C170, and C173. S-adenosyl-L-methionine is bound by residues 221–222 (GE), S255, 278–280 (SLH), and N357. The S-methylcysteine intermediate role is filled by C400.

The protein belongs to the radical SAM superfamily. RlmN family. [4Fe-4S] cluster is required as a cofactor.

It localises to the cytoplasm. It carries out the reaction adenosine(2503) in 23S rRNA + 2 reduced [2Fe-2S]-[ferredoxin] + 2 S-adenosyl-L-methionine = 2-methyladenosine(2503) in 23S rRNA + 5'-deoxyadenosine + L-methionine + 2 oxidized [2Fe-2S]-[ferredoxin] + S-adenosyl-L-homocysteine. The catalysed reaction is adenosine(37) in tRNA + 2 reduced [2Fe-2S]-[ferredoxin] + 2 S-adenosyl-L-methionine = 2-methyladenosine(37) in tRNA + 5'-deoxyadenosine + L-methionine + 2 oxidized [2Fe-2S]-[ferredoxin] + S-adenosyl-L-homocysteine. Specifically methylates position 2 of adenine 2503 in 23S rRNA and position 2 of adenine 37 in tRNAs. In Acidothermus cellulolyticus (strain ATCC 43068 / DSM 8971 / 11B), this protein is Probable dual-specificity RNA methyltransferase RlmN.